Here is a 125-residue protein sequence, read N- to C-terminus: Small ribosomal subunit protein uS12 (125 aa).

Residues M1–L24 form a disordered region. Residues R9–S19 are compositionally biased toward basic residues. 3-methylthioaspartic acid is present on D89. The tract at residues S101–A125 is disordered. The segment covering A113 to A125 has biased composition (basic residues).

Belongs to the universal ribosomal protein uS12 family. As to quaternary structure, part of the 30S ribosomal subunit. Contacts proteins S8 and S17. May interact with IF1 in the 30S initiation complex.

Functionally, with S4 and S5 plays an important role in translational accuracy. Its function is as follows. Interacts with and stabilizes bases of the 16S rRNA that are involved in tRNA selection in the A site and with the mRNA backbone. Located at the interface of the 30S and 50S subunits, it traverses the body of the 30S subunit contacting proteins on the other side and probably holding the rRNA structure together. The combined cluster of proteins S8, S12 and S17 appears to hold together the shoulder and platform of the 30S subunit. This is Small ribosomal subunit protein uS12 from Nitrosomonas europaea (strain ATCC 19718 / CIP 103999 / KCTC 2705 / NBRC 14298).